Reading from the N-terminus, the 748-residue chain is Serine/threonine-protein kinase CG17528 (748 aa).

2 stretches are compositionally biased toward polar residues: residues 22–35 and 47–59; these read QASPSATSPQSVPS and EKTNQPHNVQEDN. Disordered regions lie at residues 22-41 and 47-81; these read QASPSATSPQSVPSKANVVT and EKTNQPHNVQEDNNYNRDCDSPESSSSEQDKELDD. Residues S67, S70, S73, S87, S88, and S89 each carry the phosphoserine modification. T91 bears the Phosphothreonine mark. The residue at position 93 (S93) is a Phosphoserine. T100 is subject to Phosphothreonine. Doublecortin domains are found at residues 158-244 and 313-396; these read LRIK…VEYN and RIVT…AEDF. In terms of domain architecture, Protein kinase spans 477 to 735; the sequence is YSLGRIIGDG…SEDILDHSWT (259 aa). Residues 483-491 and K506 contribute to the ATP site; that span reads IGDGNFAIV. The active-site Proton acceptor is the D598.

Belongs to the protein kinase superfamily. CAMK Ser/Thr protein kinase family. CaMK subfamily.

It catalyses the reaction L-seryl-[protein] + ATP = O-phospho-L-seryl-[protein] + ADP + H(+). The enzyme catalyses L-threonyl-[protein] + ATP = O-phospho-L-threonyl-[protein] + ADP + H(+). The sequence is that of Serine/threonine-protein kinase CG17528 from Drosophila melanogaster (Fruit fly).